The following is a 285-amino-acid chain: Probable endonuclease 4 (285 aa).

Zn(2+)-binding residues include H69, H109, E145, D179, H182, H216, D229, H231, and E261.

Belongs to the AP endonuclease 2 family. Requires Zn(2+) as cofactor.

It carries out the reaction Endonucleolytic cleavage to 5'-phosphooligonucleotide end-products.. Functionally, endonuclease IV plays a role in DNA repair. It cleaves phosphodiester bonds at apurinic or apyrimidinic (AP) sites, generating a 3'-hydroxyl group and a 5'-terminal sugar phosphate. This is Probable endonuclease 4 from Salmonella heidelberg (strain SL476).